The sequence spans 169 residues: uncharacterized protein (169 aa).

In terms of domain architecture, N-acetyltransferase spans 4–160; it reads IEVKRLLVNY…EGVKEQLSED (157 aa).

This is an uncharacterized protein from Halalkalibacterium halodurans (strain ATCC BAA-125 / DSM 18197 / FERM 7344 / JCM 9153 / C-125) (Bacillus halodurans).